We begin with the raw amino-acid sequence, 887 residues long: 3-hydroxy-3-methylglutaryl-coenzyme A reductase (887 aa).

The Cytoplasmic portion of the chain corresponds to 1 to 9 (MLSRLFRMH). The helical transmembrane segment at 10 to 39 (GLFVASHPWEVIVGTVTLTICMMSMNMFTG) threads the bilayer. The Lumenal portion of the chain corresponds to 40–56 (NNKICGWNYECPKFEED). A helical membrane pass occupies residues 57–78 (VLSSDIIILTITRCIAILYIYF). Positions 61-218 (DIIILTITRC…MTFFPACVSL (158 aa)) constitute an SSD domain. The short motif at 75 to 78 (YIYF) is the INSIG-binding motif element. The Cytoplasmic segment spans residues 79–89 (QFQNLRQLGSK). Residue Lys89 forms a Glycyl lysine isopeptide (Lys-Gly) (interchain with G-Cter in ubiquitin) linkage. Residues 90–114 (YILGIAGLFTIFSSFVFSTVVIHFL) form a helical membrane-spanning segment. Residues 115–123 (DKELTGLNE) lie on the Lumenal side of the membrane. Residues 124–149 (ALPFFLLLIDLSRASALAKFALSSNS) traverse the membrane as a helical segment. At 150 to 159 (QDEVRENIAR) the chain is on the cytoplasmic side. A helical membrane pass occupies residues 160-187 (GMAILGPTFTLDALVECLVIGVGTMSGV). Residues 188-191 (RQLE) lie on the Lumenal side of the membrane. Residues 192-220 (IMCCFGCMSVLANYFVFMTFFPACVSLVL) traverse the membrane as a helical segment. The Cytoplasmic portion of the chain corresponds to 221-248 (ELSRESREGRPIWQLSHFARVLEEEENK). Lys248 participates in a covalent cross-link: Glycyl lysine isopeptide (Lys-Gly) (interchain with G-Cter in ubiquitin). Residues 249-275 (PNPVTQRVKMIMSLGLVLVHAHSRWIA) form a helical membrane-spanning segment. Residues 276–314 (DPSPQNSTTEHSKVSLGLDEDVSKRIEPSVSLWQFYLSK) lie on the Lumenal side of the membrane. The N-linked (GlcNAc...) asparagine glycan is linked to Asn281. The chain crosses the membrane as a helical span at residues 315–339 (MISMDIEQVVTLSLAFLLAVKYIFF). The Cytoplasmic segment spans residues 340–887 (EQAETESTLS…LQGTCTKKSA (548 aa)). Catalysis depends on charge relay system residues Glu558, Lys690, and Asp766. His865 (proton donor) is an active-site residue. Ser871 is modified (phosphoserine; by AMPK).

The protein belongs to the HMG-CoA reductase family. As to quaternary structure, homotetramer. Homodimer. Interacts (via its SSD) with INSIG1; the interaction, accelerated by sterols, leads to the recruitment of HMGCR to AMFR/gp78 for its ubiquitination by the sterol-mediated ERAD pathway. Interacts with UBIAD1. N-glycosylated. Glycosylated with high mannose chains including Man(6)(GlcNAc)(2), Man(7)(GlcNAc)(2) and Man(8)(GlcNAc)(2). Deglycosylated by NGLY1 on release from the endoplasmic reticulum (ER) in a sterol-mediated manner. Post-translationally, undergoes sterol-mediated ubiquitination and ER-associated degradation (ERAD). Accumulation of sterols in the endoplasmic reticulum (ER) membrane, triggers binding of the reductase to the ER membrane protein INSIG1 or INSIG2. The INSIG1 binding leads to the recruitment of the ubiquitin ligase, AMFR/gp78, RNF139 or RNF145, initiating ubiquitination of the reductase. The ubiquitinated reductase is then extracted from the ER membrane and delivered to cytosolic 26S proteosomes by a mechanism probably mediated by the ATPase Valosin-containing protein VCP/p97. The INSIG2-binding leads to the recruitment of the ubiquitin ligase RNF139, initiating ubiquitination of the reductase. Lys-248 is the main site of ubiquitination. Ubiquitination is enhanced by the presence of a geranylgeranylated protein. In terms of processing, phosphorylated. Phosphorylation at Ser-871 reduces the catalytic activity.

The protein localises to the endoplasmic reticulum membrane. The protein resides in the peroxisome membrane. The enzyme catalyses (R)-mevalonate + 2 NADP(+) + CoA = (3S)-3-hydroxy-3-methylglutaryl-CoA + 2 NADPH + 2 H(+). Its pathway is metabolic intermediate biosynthesis; (R)-mevalonate biosynthesis; (R)-mevalonate from acetyl-CoA: step 3/3. Its activity is regulated as follows. Regulated by a negative feedback mechanism through sterols and non-sterol metabolites derived from mevalonate. Phosphorylation at Ser-871 down-regulates the catalytic activity. Its function is as follows. Catalyzes the conversion of (3S)-hydroxy-3-methylglutaryl-CoA (HMG-CoA) to mevalonic acid, the rate-limiting step in the synthesis of cholesterol and other isoprenoids, thus plays a critical role in cellular cholesterol homeostasis. The sequence is that of 3-hydroxy-3-methylglutaryl-coenzyme A reductase (HMGCR) from Cricetulus griseus (Chinese hamster).